Here is a 155-residue protein sequence, read N- to C-terminus: MKVEIDSFSGAKIYPGRGTLFVRGDSKVFRFHSSKSASLFHQRKNPRRIAWTVLYRRHHKKGITEEVAKKRSRKTVKAQRAVVGASLELIKERRSLKPEIRKAKRDEKAKADKEKKKADKAARKADKAKSAATQASKISKQQAKGAFQKVAATSR.

The span at 97 to 129 (KPEIRKAKRDEKAKADKEKKKADKAARKADKAK) shows a compositional bias: basic and acidic residues. The disordered stretch occupies residues 97–155 (KPEIRKAKRDEKAKADKEKKKADKAARKADKAKSAATQASKISKQQAKGAFQKVAATSR). Residues 133–142 (TQASKISKQQ) show a composition bias toward polar residues.

The protein belongs to the eukaryotic ribosomal protein eL24 family.

This chain is Large ribosomal subunit protein eL24 (RPL24), found in Eremothecium gossypii (strain ATCC 10895 / CBS 109.51 / FGSC 9923 / NRRL Y-1056) (Yeast).